Here is a 545-residue protein sequence, read N- to C-terminus: Adenine deaminase (545 aa).

This sequence belongs to the metallo-dependent hydrolases superfamily. Adenine deaminase family. Requires Mn(2+) as cofactor.

It catalyses the reaction adenine + H2O + H(+) = hypoxanthine + NH4(+). The chain is Adenine deaminase from Parabacteroides distasonis (strain ATCC 8503 / DSM 20701 / CIP 104284 / JCM 5825 / NCTC 11152).